The sequence spans 171 residues: Small ribosomal subunit protein mS25 (171 aa).

It belongs to the mitochondrion-specific ribosomal protein mS25 family. In terms of assembly, component of the mitochondrial ribosome small subunit (28S) which comprises a 12S rRNA and about 30 distinct proteins.

It localises to the mitochondrion. This Mus musculus (Mouse) protein is Small ribosomal subunit protein mS25 (Mrps25).